The primary structure comprises 204 residues: Probable nicotinate-nucleotide adenylyltransferase (204 aa).

This sequence belongs to the NadD family.

It catalyses the reaction nicotinate beta-D-ribonucleotide + ATP + H(+) = deamido-NAD(+) + diphosphate. It participates in cofactor biosynthesis; NAD(+) biosynthesis; deamido-NAD(+) from nicotinate D-ribonucleotide: step 1/1. Functionally, catalyzes the reversible adenylation of nicotinate mononucleotide (NaMN) to nicotinic acid adenine dinucleotide (NaAD). This Mycolicibacterium gilvum (strain PYR-GCK) (Mycobacterium gilvum (strain PYR-GCK)) protein is Probable nicotinate-nucleotide adenylyltransferase.